The primary structure comprises 160 residues: Iron-sulfur assembly protein IscA1 (160 aa).

This sequence belongs to the HesB/IscA family. In terms of assembly, tetramer.

The protein localises to the mitochondrion. It functions in the pathway cofactor biosynthesis; iron-sulfur cluster biosynthesis. Its function is as follows. Participates in iron-sulfur cluster formation (ISC) pathway for iron-sulfur (Fe-S) cluster biogenesis. Can bind iron and [4Fe-4S] clusters. May function as an iron chaperone. This is Iron-sulfur assembly protein IscA1 from Plasmodium falciparum (isolate 3D7).